A 907-amino-acid chain; its full sequence is DNA (cytosine-5)-methyltransferase CMT3 (907 aa).

The span at 1–15 (MAPSSPSSAAAPTRT) shows a compositional bias: low complexity. The tract at residues 1 to 154 (MAPSSPSSAA…RNAATRRPDE (154 aa)) is disordered. Residues 30–63 (ATDEPSTKRTRRPKAETKPRKKKDEVKEEEKPPM) are compositionally biased toward basic and acidic residues. Acidic residues predominate over residues 64–89 (EDDACGEEPDAEEMALGEEAEAEEAE). 2 stretches are compositionally biased toward basic and acidic residues: residues 115-124 (HGSDGDHDPE) and 131-140 (PAKEARDKWP). Positions 172 to 297 (TLYCLHDDVY…VAYSTFANIP (126 aa)) constitute a BAH domain. The disordered stretch occupies residues 303–323 (SGSDTASDISSDDVDSSKGKV). The 534-residue stretch at 335-868 (ATLLDLYSGC…YSLGLAYQRE (534 aa)) folds into the SAM-dependent MTase C5-type domain. In terms of domain architecture, Chromo spans 437 to 500 (FVVEKLAGIC…EGYRRKILPL (64 aa)). Cysteine 513 is a catalytic residue.

Belongs to the class I-like SAM-binding methyltransferase superfamily. C5-methyltransferase family.

It is found in the nucleus. It carries out the reaction a 2'-deoxycytidine in DNA + S-adenosyl-L-methionine = a 5-methyl-2'-deoxycytidine in DNA + S-adenosyl-L-homocysteine + H(+). In terms of biological role, involved in CpXpG DNA methylation. Plays a critical role in the maintenance of CpXpG DNA methylation and suppression of a wide spectrum of transposable element (TE) activities. Required for proper plant development in reproductive stage. This chain is DNA (cytosine-5)-methyltransferase CMT3, found in Oryza sativa subsp. japonica (Rice).